The following is a 512-amino-acid chain: Phospho-2-dehydro-3-deoxyheptonate aldolase 2, chloroplastic (512 aa).

The transit peptide at 1–57 directs the protein to the chloroplast; the sequence is MALTATATTRGGSALPNSCLQTPKFQSLQKPTFISSFPTNKKTKPRTKHISAVQSPP. Residues 37–57 are disordered; that stretch reads FPTNKKTKPRTKHISAVQSPP. Cysteine 126 provides a ligand contact to Mn(2+). Substrate is bound by residues arginine 165, 324–325, lysine 347, and arginine 378; that span reads ER. Histidine 410, glutamate 452, and aspartate 482 together coordinate Mn(2+).

The protein belongs to the class-II DAHP synthase family. As to quaternary structure, homodimer. Mn(2+) serves as cofactor. Mostly expressed in leaves and stems, and, to a lower extent, in roots, stigmas, anthers, petal tubes, petal limbs and sepals.

It is found in the plastid. Its subcellular location is the chloroplast. It catalyses the reaction D-erythrose 4-phosphate + phosphoenolpyruvate + H2O = 7-phospho-2-dehydro-3-deoxy-D-arabino-heptonate + phosphate. It participates in metabolic intermediate biosynthesis; chorismate biosynthesis; chorismate from D-erythrose 4-phosphate and phosphoenolpyruvate: step 1/7. Its function is as follows. Involved in the production of volatile organic compounds (VOCs). Catalyzes an aldol-like condensation reaction between phosphoenolpyruvate (PEP) and D-erythrose 4-phosphate (E4P) to generate 3-deoxy-D-arabino-heptulosonate 7-phosphate (DAH7P) and inorganic phosphate. In Petunia hybrida (Petunia), this protein is Phospho-2-dehydro-3-deoxyheptonate aldolase 2, chloroplastic.